We begin with the raw amino-acid sequence, 487 residues long: NADH-quinone oxidoreductase subunit N (487 aa).

The next 13 helical transmembrane spans lie at Ile7–Val27, Leu38–Ala58, Tyr79–Leu99, Ile111–Ala131, Phe164–Phe184, Leu207–Phe227, Ala238–Phe258, Val276–Thr296, Leu301–Thr321, Val328–Ala348, Ala373–Phe393, Gly406–Leu426, and Val451–Val471.

Belongs to the complex I subunit 2 family. NDH-1 is composed of 14 different subunits. Subunits NuoA, H, J, K, L, M, N constitute the membrane sector of the complex.

The protein localises to the cell inner membrane. The enzyme catalyses a quinone + NADH + 5 H(+)(in) = a quinol + NAD(+) + 4 H(+)(out). Functionally, NDH-1 shuttles electrons from NADH, via FMN and iron-sulfur (Fe-S) centers, to quinones in the respiratory chain. The immediate electron acceptor for the enzyme in this species is believed to be ubiquinone. Couples the redox reaction to proton translocation (for every two electrons transferred, four hydrogen ions are translocated across the cytoplasmic membrane), and thus conserves the redox energy in a proton gradient. This is NADH-quinone oxidoreductase subunit N from Rhodospirillum rubrum (strain ATCC 11170 / ATH 1.1.1 / DSM 467 / LMG 4362 / NCIMB 8255 / S1).